Reading from the N-terminus, the 152-residue chain is B3 domain-containing protein At1g10455 (152 aa).

Residues 24 to 131 (LKKKLSDSDL…EVKFKHFKSQ (108 aa)) constitute a DNA-binding region (TF-B3).

It localises to the nucleus. The sequence is that of B3 domain-containing protein At1g10455 from Arabidopsis thaliana (Mouse-ear cress).